The sequence spans 379 residues: Elongation factor Ts, mitochondrial (379 aa).

A mitochondrion-targeting transit peptide spans Met-1 to Leu-45.

This sequence belongs to the EF-Ts family.

It localises to the mitochondrion. Associates with the EF-Tu.GDP complex and induces the exchange of GDP to GTP. It remains bound to the aminoacyl-tRNA.EF-Tu.GTP complex up to the GTP hydrolysis stage on the ribosome. The protein is Elongation factor Ts, mitochondrial of Ricinus communis (Castor bean).